A 495-amino-acid polypeptide reads, in one-letter code: Histidine--tRNA ligase (495 aa).

The protein belongs to the class-II aminoacyl-tRNA synthetase family. Homodimer.

It is found in the cytoplasm. The enzyme catalyses tRNA(His) + L-histidine + ATP = L-histidyl-tRNA(His) + AMP + diphosphate + H(+). The protein is Histidine--tRNA ligase of Ruegeria pomeroyi (strain ATCC 700808 / DSM 15171 / DSS-3) (Silicibacter pomeroyi).